The following is a 107-amino-acid chain: SH3 domain-binding glutamic acid-rich-like protein 2 (107 aa).

Residues 61 to 67 carry the SH3-binding motif; that stretch reads QGNPLPP.

This sequence belongs to the SH3BGR family.

Its subcellular location is the nucleus. This Bos taurus (Bovine) protein is SH3 domain-binding glutamic acid-rich-like protein 2 (SH3BGRL2).